Reading from the N-terminus, the 783-residue chain is MMRGIDSRHELDPTLLLRDTRTFTQRLADFFADPTNISIVLISLAAVSYYFSEAATFLLIMGGIFFLYSYTRKQKLPFRLPQISRAKDYNDLKPGINKPNIARGITFFGNDRKTGEELWFANDDMRTHALIFGSTGSGKTETLVSLSYNALVQGSGFIYVDGKGDNSLYAKVFSMVRSMGREDDLLLINFMTGARDIVGPQEKRLSNTLNPFCQGSSSMLTQLVVSLMGSSGQSSDGDMWKGRAIAFVEALMRLLVYMRDEGAILLDANTIRNYFDLQRLESIVIDKVFPRDDQESVNIETIPKLVTDPLRNYLNTLPGYNKEKKGKQVSQVLEQHGFITMQLVRSFSSLADTYGHIIRTNLAEVDFKDVVLNRRILVVLLPALEKSPDELSNLGKIIVSSLKAMMAAGLGEEVEGDYRDVILRKPTNAPTPYMCILDEYGYYAVQGFAVVPAQARSLGFSAIFAGQDLPAFQKASKEEAASIGANTNIKICMKLEDPTETWDFFTKTAGEAYVTKVDSFQTKETSIANSYMDTKSSSFEKRARVDLLDLKEQTEGEAHIFFKSKIVRARMFYANPKPVKQLKINQFLKVEPPPDDYLMKLQKQLASFQSILESGDLSINKAVENEEITLISKALKESTIVEPIERGVAALIAFHGQNEPEPVEDIVEEEVEGALTIFSKLRIDPNAPPILVADKEVFSEPLLPINETRNQMITIERLAGAKDKYAGTVANELIKDFQIATSYPPEERDVIDVQELTGIIRDLSAKISAEREKANKKAAEELT.

The helical transmembrane segment at 47–67 (VSYYFSEAATFLLIMGGIFFL) threads the bilayer. The tract at residues 100-500 (NIARGITFFG…ICMKLEDPTE (401 aa)) is ATPase domain. Residues 671–773 (VEGALTIFSK…SAKISAEREK (103 aa)) are interaction with IcmS/IcmW.

The T4BSS is a complex nanomachine composed of several subcomplexes. This subunit is part of the Type IV Coupling Complex (T4CC), a subcomplex composed of the DotLMNYZ core and the IcmSW-LvgA adapter subunits, linked by the C-terminal tail of DotL. Six DotLMNYZ hetero-pentameric units may assemble into a hexameric nanomachine, forming an inner membrane channel for effectors to pass through. Interacts directly with DotM. Interacts directly, via its C-terminal region, with the type IV adapter proteins IcmS and IcmW. Also interacts with DotN and LvgA via its C-terminal region.

Its subcellular location is the cell inner membrane. Functionally, component of the Dot/Icm type IVB secretion system (T4BSS), which is used to inject bacterial effector proteins into eukaryotic host cells. Part of a subcomplex which recruits effector proteins and delivers them to the core transmembrane subcomplex. Plays a central role in the assembly of the subcomplex. Required for the recruitment of IcmS and IcmW to the inner membrane and for the translocation of adapter-dependent substrates. May have ATPase activity. The chain is Type 4 coupling protein DotL from Legionella pneumophila subsp. pneumophila (strain Philadelphia 1 / ATCC 33152 / DSM 7513).